We begin with the raw amino-acid sequence, 141 residues long: Large ribosomal subunit protein uL11 (141 aa).

It belongs to the universal ribosomal protein uL11 family. In terms of assembly, part of the ribosomal stalk of the 50S ribosomal subunit. Interacts with L10 and the large rRNA to form the base of the stalk. L10 forms an elongated spine to which L12 dimers bind in a sequential fashion forming a multimeric L10(L12)X complex. Post-translationally, one or more lysine residues are methylated.

Its function is as follows. Forms part of the ribosomal stalk which helps the ribosome interact with GTP-bound translation factors. This chain is Large ribosomal subunit protein uL11, found in Synechocystis sp. (strain ATCC 27184 / PCC 6803 / Kazusa).